Here is a 335-residue protein sequence, read N- to C-terminus: Antigen-presenting glycoprotein CD1d (335 aa).

Positions 1–19 are cleaved as a signal peptide; that stretch reads MGCLLFLLLWALLQAWGSA. At 20 to 301 the chain is on the extracellular side; that stretch reads EVPQRLFPLR…VLYWGGSYTS (282 aa). Asparagine 38 and asparagine 60 each carry an N-linked (GlcNAc...) asparagine glycan. Aspartate 98 contributes to the a D-galactosylceramide binding site. Intrachain disulfides connect cysteine 120–cysteine 184 and cysteine 224–cysteine 279. The N-linked (GlcNAc...) asparagine glycan is linked to asparagine 126. 169–172 provides a ligand contact to a D-galactosylceramide; it reads DKWT. Asparagine 181 carries N-linked (GlcNAc...) asparagine glycosylation. Residues 185–292 enclose the Ig-like domain; it reads PQFVSGLLES…HSSLEGQDIV (108 aa). The helical transmembrane segment at 302–322 threads the bilayer; it reads MGLIALAVLACLLFLLIVGFT. The Cytoplasmic segment spans residues 323 to 335; that stretch reads SRFKRQTSYQGVL. Positions 331–334 match the Internalization signal motif; that stretch reads YQGV.

Heterodimer with B2M (beta-2-microglobulin). Interacts with MHC II. In terms of tissue distribution, expressed on cortical thymocytes, on certain T-cell leukemias, and in various other tissues.

It localises to the cell membrane. The protein localises to the basolateral cell membrane. Its subcellular location is the endosome membrane. The protein resides in the lysosome membrane. It is found in the endoplasmic reticulum membrane. Functionally, antigen-presenting protein that binds self and non-self glycolipids and presents them to T-cell receptors on natural killer T-cells. The protein is Antigen-presenting glycoprotein CD1d (CD1D) of Homo sapiens (Human).